A 390-amino-acid chain; its full sequence is Monomeric sarcosine oxidase (390 aa).

6–36 provides a ligand contact to FAD; the sequence is DVIVVGAGSMGMAAGYQLAKQGVKTLLVDAF. Cysteine 316 is subject to S-8alpha-FAD cysteine.

In terms of assembly, monomer. FAD serves as cofactor.

The protein localises to the cytoplasm. It carries out the reaction sarcosine + O2 + H2O = formaldehyde + glycine + H2O2. Pyrrole-2-carboxylate is a competitive inhibitor. N-(cyclopropyl)glycine (CPG) is a mechanism-based inhibitor and inactivates the enzyme by covalently modifying the flavin. Functionally, catalyzes the oxidative demethylation of sarcosine. Can also oxidize other secondary amino acids such as N-methyl-L-alanine. This chain is Monomeric sarcosine oxidase (soxA), found in Bacillus sp. (strain B-0618).